Here is a 132-residue protein sequence, read N- to C-terminus: MTMTDPIADFLTRLRNANSAYHDEVSLPHSKLKANIAQILKNEGYISDFRTEDARVGKSLVIQLKYGPSRERSIAGLRRVSKPGLRVYAKSTNLPRVLGGLGVAIISTSSGLLTDRQAARQGVGGEVLAYVW.

This sequence belongs to the universal ribosomal protein uS8 family. In terms of assembly, part of the 30S ribosomal subunit. Contacts proteins S5 and S12.

Its function is as follows. One of the primary rRNA binding proteins, it binds directly to 16S rRNA central domain where it helps coordinate assembly of the platform of the 30S subunit. The protein is Small ribosomal subunit protein uS8 of Mycobacterium bovis (strain ATCC BAA-935 / AF2122/97).